We begin with the raw amino-acid sequence, 173 residues long: Cytochrome c homolog (173 aa).

Over methionine 1–lysine 8 the chain is Cytoplasmic. The chain crosses the membrane as a helical; Signal-anchor span at residues isoleucine 9–isoleucine 29. Residues leucine 30–lysine 173 are Periplasmic-facing. Cysteine 82, cysteine 85, histidine 86, and methionine 148 together coordinate heme c.

The protein belongs to the cytochrome c family. In terms of processing, binds 1 heme c group covalently per subunit.

The protein resides in the cell membrane. Functionally, may be involved in electron transfer from bc1 complex to aa3. The chain is Cytochrome c homolog (cycM) from Rickettsia bellii (strain RML369-C).